The sequence spans 467 residues: ATP synthase subunit beta (467 aa).

Residue 156–163 (GGAGVGKT) coordinates ATP.

Belongs to the ATPase alpha/beta chains family. As to quaternary structure, F-type ATPases have 2 components, CF(1) - the catalytic core - and CF(0) - the membrane proton channel. CF(1) has five subunits: alpha(3), beta(3), gamma(1), delta(1), epsilon(1). CF(0) has three main subunits: a(1), b(2) and c(9-12). The alpha and beta chains form an alternating ring which encloses part of the gamma chain. CF(1) is attached to CF(0) by a central stalk formed by the gamma and epsilon chains, while a peripheral stalk is formed by the delta and b chains.

It is found in the cell inner membrane. The enzyme catalyses ATP + H2O + 4 H(+)(in) = ADP + phosphate + 5 H(+)(out). Functionally, produces ATP from ADP in the presence of a proton gradient across the membrane. The catalytic sites are hosted primarily by the beta subunits. This Cupriavidus taiwanensis (strain DSM 17343 / BCRC 17206 / CCUG 44338 / CIP 107171 / LMG 19424 / R1) (Ralstonia taiwanensis (strain LMG 19424)) protein is ATP synthase subunit beta.